A 192-amino-acid polypeptide reads, in one-letter code: uncharacterized protein (192 aa).

This is an uncharacterized protein from Methanocaldococcus jannaschii (strain ATCC 43067 / DSM 2661 / JAL-1 / JCM 10045 / NBRC 100440) (Methanococcus jannaschii).